The chain runs to 671 residues: MAESLEEAKQEVRQLRAQLDQWAKAYYEQDAPVVEDHVYDEKYARLLELEAAYPELKSADSITQRVGGEVNSDLPKVEHPVPMLSMGDVFSKEELAEFDQRVQKAIGHPVAYNVELKIDGLSLSLEYEEGCLKRASTRGNGQVGEDVTKNVKYIKDVPQKLPKAITTEVRGECYMSKEAFAKLNQERDEAGESIFANPRNAAAGSLRQLDPKVTKKRQLSTFIYTWINPPAGIDSQHQAICEMAKLGFHTNENGRRLENLADVYDYIDEFTKKRDSLPYVIDGIVLKVDDLALQADLGNTVKVPRWEIAYKFPPEEEETVVREIEWTVGRTGVVTPTAVMDPVRLAGSTVARASLHNPDLLAKLDVRLGDTVKLHKAGDIIPEISEVVLSKRPEDSVPYEVPTKCPSCGEDLVHLDEEVALRCINPSCPAQVEEGITHFASRQAMNIAGLGPKIVKQLIAKDLVHNVADLYYLTADDLSQLDHFKEKSINNLLVAIDQSRKNSVELVLFGLGIDNVGGKAAQLIARKFKNMSKIASASVQELTAIDTIGMTIAESLTAYFQQEEAKKLLARLEEAGVNMDYLGEDGEAADNFFKGKTVVLTGKLAHYSRAEFTKKLQALGAKVTGSVSKKTNCLVYGEDAGSKLAKAEALDIPRLTEAEAISKIEEKDTEK.

Residues 36-40 (DHVYD), 85-86 (SM), and glutamate 115 contribute to the NAD(+) site. Residue lysine 117 is the N6-AMP-lysine intermediate of the active site. Residues arginine 138, glutamate 172, lysine 287, and lysine 311 each coordinate NAD(+). Residues cysteine 405, cysteine 408, cysteine 423, and cysteine 428 each coordinate Zn(2+). Residues 588-671 (AADNFFKGKT…SKIEEKDTEK (84 aa)) form the BRCT domain.

It belongs to the NAD-dependent DNA ligase family. LigA subfamily. Requires Mg(2+) as cofactor. Mn(2+) serves as cofactor.

It catalyses the reaction NAD(+) + (deoxyribonucleotide)n-3'-hydroxyl + 5'-phospho-(deoxyribonucleotide)m = (deoxyribonucleotide)n+m + AMP + beta-nicotinamide D-nucleotide.. DNA ligase that catalyzes the formation of phosphodiester linkages between 5'-phosphoryl and 3'-hydroxyl groups in double-stranded DNA using NAD as a coenzyme and as the energy source for the reaction. It is essential for DNA replication and repair of damaged DNA. The sequence is that of DNA ligase from Lactobacillus delbrueckii subsp. bulgaricus (strain ATCC 11842 / DSM 20081 / BCRC 10696 / JCM 1002 / NBRC 13953 / NCIMB 11778 / NCTC 12712 / WDCM 00102 / Lb 14).